The chain runs to 36 residues: Peroxiredoxin-4 (36 aa).

The protein belongs to the peroxiredoxin family. AhpC/Prx1 subfamily. As to quaternary structure, homodimer; disulfide-linked, upon oxidation. In terms of tissue distribution, venom gland.

Its subcellular location is the secreted. It carries out the reaction a hydroperoxide + [thioredoxin]-dithiol = an alcohol + [thioredoxin]-disulfide + H2O. In terms of biological role, venom peroxiredoxin enzyme that may play a role as part of a redox pathway leading to the structural/functional diversification of toxins through a disulfide bond engineering mechanism. In Crotalus atrox (Western diamondback rattlesnake), this protein is Peroxiredoxin-4.